A 349-amino-acid polypeptide reads, in one-letter code: MVGIALLGAGIFAREQHLPAIESVGHLNLKAVYSRSEEAAISLAKQARDRVDIYFDSPPTSGRSLDDLLARSDIAAVAACATILVQPLLIRKALRAGKHVLSEKPIAQDTATAMGLVQWYSSQSSPPIWAVAENFRFNESLRYAEMRTQEIGGELASFRLTYYGLIRKENKYFKTEWRKTPEFQGGFLLDSGIHFIASLRLLLRAVGQEPKEVMALSSLLKEHLHPVDTIHAVVSTIDSRHGTVCISFGVEHISTLEIEIISTRGVIVWTPVSVTSIIKSDSGESMNEKKEFIYNNGVKAEFEAFCQAILQNSPDPRQSPLEALRDLALLQSLLGSAACDGSMKLVKFE.

This sequence belongs to the Gfo/Idh/MocA family.

It functions in the pathway secondary metabolite biosynthesis. Its function is as follows. Dehydrogenase; part of the gene cluster that mediates the biosynthesis of the gamma-pyrones fusapyrone (FPY) and deoxyfusapyrone (dFPY). FPY is an undecaketide and thus likely synthesized by the polyketide synthase FPY1 from acetyl-CoA functioning as starter unit and the addition of 10 malonyl-CoA extender units by successive Claisen-condensations. Next to this, FPY shares some rare features: C-glycosylated 4-deoxyglucose at C-3, a gem-dimethyl group at C-13, and an alpha-beta to beta-gamma double bond shift at C-20. During FPY biosynthesis mono-C-methyl groups are transferred to the tetra-, penta-, hexa- and heptaketide, while two C-methyl groups are transferred to the nonaketide, suggesting that the CMet domain is programmed to selectively catalyze two successive C-alpha-methylation reactions of the nonaketide, while other alpha-carbons are non- or mono-methylated only. While the origin of the 4'-deoxyglucose moiety remains opaque, its transfer to C-3 is most likely mediated by the C-glycosyltransferase FPY2. Next to this, the hydroxyl group present at C-33 and discriminating between FPY and dFPY, is likely to be installed by the cytochrome P450 monooxygenase FPY7. No putative function can be predicted for the remaining genes FPY3-FPY6. The protein is Dehydrogenase FPY6 of Fusarium mangiferae (Mango malformation disease fungus).